We begin with the raw amino-acid sequence, 165 residues long: 3-hydroxyacyl-[acyl-carrier-protein] dehydratase FabZ (165 aa).

Residue H68 is part of the active site.

It belongs to the thioester dehydratase family. FabZ subfamily.

The protein localises to the cytoplasm. It catalyses the reaction a (3R)-hydroxyacyl-[ACP] = a (2E)-enoyl-[ACP] + H2O. Involved in unsaturated fatty acids biosynthesis. Catalyzes the dehydration of short chain beta-hydroxyacyl-ACPs and long chain saturated and unsaturated beta-hydroxyacyl-ACPs. The polypeptide is 3-hydroxyacyl-[acyl-carrier-protein] dehydratase FabZ (Methylobacterium sp. (strain 4-46)).